A 379-amino-acid chain; its full sequence is Tryptophan 2,3-dioxygenase (379 aa).

Residues phenylalanine 57–histidine 61 and arginine 128 each bind substrate. Histidine 312 contributes to the heme binding site. Substrate is bound at residue threonine 327.

This sequence belongs to the tryptophan 2,3-dioxygenase family. As to quaternary structure, homotetramer. Dimer of dimers. Heme serves as cofactor.

It catalyses the reaction L-tryptophan + O2 = N-formyl-L-kynurenine. The protein operates within amino-acid degradation; L-tryptophan degradation via kynurenine pathway; L-kynurenine from L-tryptophan: step 1/2. Its pathway is pigment biosynthesis; ommochrome biosynthesis. Heme-dependent dioxygenase that catalyzes the oxidative cleavage of the L-tryptophan (L-Trp) pyrrole ring and converts L-tryptophan to N-formyl-L-kynurenine. Catalyzes the oxidative cleavage of the indole moiety. Required during larval growth to control the level of potentially harmful free tryptophan in the hemolymph. In the adult the same reaction is the first step in the ommochrome biosynthetic pathway. This Drosophila melanogaster (Fruit fly) protein is Tryptophan 2,3-dioxygenase.